Reading from the N-terminus, the 250-residue chain is Glutamate racemase (250 aa).

Substrate-binding positions include 7-8 (DS) and 39-40 (YG). Cys-70 functions as the Proton donor/acceptor in the catalytic mechanism. 71–72 (NT) contributes to the substrate binding site. Cys-180 functions as the Proton donor/acceptor in the catalytic mechanism. 181 to 182 (TH) is a binding site for substrate.

The protein belongs to the aspartate/glutamate racemases family.

It catalyses the reaction L-glutamate = D-glutamate. Its pathway is cell wall biogenesis; peptidoglycan biosynthesis. Provides the (R)-glutamate required for cell wall biosynthesis. This Campylobacter jejuni subsp. jejuni serotype O:2 (strain ATCC 700819 / NCTC 11168) protein is Glutamate racemase.